The chain runs to 548 residues: Probable 5-epi-aristolochene synthase 4 (548 aa).

Mg(2+) contacts are provided by aspartate 301, aspartate 305, aspartate 444, threonine 448, and glutamate 452. Residues 301-305 carry the DDXXD motif motif; the sequence is DDTFD.

It belongs to the terpene synthase family. In terms of assembly, monomer. Requires Mg(2+) as cofactor.

The protein resides in the cytoplasm. It catalyses the reaction (2E,6E)-farnesyl diphosphate = (+)-5-epi-aristolochene + diphosphate. Its pathway is secondary metabolite biosynthesis; terpenoid biosynthesis. Functionally, catalyzes the cyclization of trans,trans-farnesyl diphosphate (FPP) to the bicyclic intermediate 5-epi-aristolochene, initial step in the conversion of FPP to the sesquiterpenoid antifungal phytoalexin capsidiol. Produces germacrene A as an enzyme-bound intermediate that is not released by the enzyme, but is further cyclized to produce the bicyclic 5-epi-aristolochene. The chain is Probable 5-epi-aristolochene synthase 4 from Nicotiana attenuata (Coyote tobacco).